We begin with the raw amino-acid sequence, 270 residues long: Formamidopyrimidine-DNA glycosylase (270 aa).

The active-site Schiff-base intermediate with DNA is P2. E3 serves as the catalytic Proton donor. K57 functions as the Proton donor; for beta-elimination activity in the catalytic mechanism. The DNA site is built by H90, R109, and K150. An FPG-type zinc finger spans residues L235–K269. The Proton donor; for delta-elimination activity role is filled by R259.

It belongs to the FPG family. Monomer. The cofactor is Zn(2+).

The enzyme catalyses Hydrolysis of DNA containing ring-opened 7-methylguanine residues, releasing 2,6-diamino-4-hydroxy-5-(N-methyl)formamidopyrimidine.. The catalysed reaction is 2'-deoxyribonucleotide-(2'-deoxyribose 5'-phosphate)-2'-deoxyribonucleotide-DNA = a 3'-end 2'-deoxyribonucleotide-(2,3-dehydro-2,3-deoxyribose 5'-phosphate)-DNA + a 5'-end 5'-phospho-2'-deoxyribonucleoside-DNA + H(+). Involved in base excision repair of DNA damaged by oxidation or by mutagenic agents. Acts as a DNA glycosylase that recognizes and removes damaged bases. Has a preference for oxidized purines, such as 7,8-dihydro-8-oxoguanine (8-oxoG). Has AP (apurinic/apyrimidinic) lyase activity and introduces nicks in the DNA strand. Cleaves the DNA backbone by beta-delta elimination to generate a single-strand break at the site of the removed base with both 3'- and 5'-phosphates. The polypeptide is Formamidopyrimidine-DNA glycosylase (Histophilus somni (strain 129Pt) (Haemophilus somnus)).